A 255-amino-acid chain; its full sequence is 1-(5-phosphoribosyl)-5-[(5-phosphoribosylamino)methylideneamino] imidazole-4-carboxamide isomerase (255 aa).

The active-site Proton acceptor is the aspartate 8. Aspartate 129 serves as the catalytic Proton donor.

Belongs to the HisA/HisF family.

The protein resides in the cytoplasm. It catalyses the reaction 1-(5-phospho-beta-D-ribosyl)-5-[(5-phospho-beta-D-ribosylamino)methylideneamino]imidazole-4-carboxamide = 5-[(5-phospho-1-deoxy-D-ribulos-1-ylimino)methylamino]-1-(5-phospho-beta-D-ribosyl)imidazole-4-carboxamide. The protein operates within amino-acid biosynthesis; L-histidine biosynthesis; L-histidine from 5-phospho-alpha-D-ribose 1-diphosphate: step 4/9. The sequence is that of 1-(5-phosphoribosyl)-5-[(5-phosphoribosylamino)methylideneamino] imidazole-4-carboxamide isomerase from Prochlorococcus marinus subsp. pastoris (strain CCMP1986 / NIES-2087 / MED4).